Here is a 687-residue protein sequence, read N- to C-terminus: Light-independent protochlorophyllide reductase subunit B (687 aa).

Asp36 is a binding site for [4Fe-4S] cluster. Asp441 acts as the Proton donor in catalysis. 576 to 577 (GM) lines the substrate pocket.

It belongs to the ChlB/BchB/BchZ family. In terms of assembly, protochlorophyllide reductase is composed of three subunits; ChlL, ChlN and ChlB. Forms a heterotetramer of two ChlB and two ChlN subunits. [4Fe-4S] cluster serves as cofactor.

The protein resides in the plastid. It localises to the chloroplast. It catalyses the reaction chlorophyllide a + oxidized 2[4Fe-4S]-[ferredoxin] + 2 ADP + 2 phosphate = protochlorophyllide a + reduced 2[4Fe-4S]-[ferredoxin] + 2 ATP + 2 H2O. The protein operates within porphyrin-containing compound metabolism; chlorophyll biosynthesis (light-independent). Component of the dark-operative protochlorophyllide reductase (DPOR) that uses Mg-ATP and reduced ferredoxin to reduce ring D of protochlorophyllide (Pchlide) to form chlorophyllide a (Chlide). This reaction is light-independent. The NB-protein (ChlN-ChlB) is the catalytic component of the complex. This is Light-independent protochlorophyllide reductase subunit B from Chlamydomonas reinhardtii (Chlamydomonas smithii).